Reading from the N-terminus, the 359-residue chain is Serine/threonine-protein phosphatase 2A activator 2 (359 aa).

Belongs to the PTPA-type PPIase family.

The protein resides in the cytoplasm. It carries out the reaction [protein]-peptidylproline (omega=180) = [protein]-peptidylproline (omega=0). In terms of biological role, PPIases accelerate the folding of proteins. It catalyzes the cis-trans isomerization of proline imidic peptide bonds in oligopeptides. Acts as a regulatory subunit for PP2A-like phosphatases modulating their activity or substrate specificity, probably by inducing a conformational change in the catalytic subunit, a direct target of the PPIase. Can reactivate inactive phosphatase PP2A-phosphatase methylesterase complexes (PP2Ai) in presence of ATP and Mg(2+) by dissociating the inactive form from the complex. The polypeptide is Serine/threonine-protein phosphatase 2A activator 2 (RRD2) (Eremothecium gossypii (strain ATCC 10895 / CBS 109.51 / FGSC 9923 / NRRL Y-1056) (Yeast)).